We begin with the raw amino-acid sequence, 241 residues long: MIRYKGFILFLLLMLIGCEQREELISNLSQRQANEIISVLERHNITARKVDGGKQGISVQVEKGTFASAVDLMRMYDLPNPERVDISQMFPTDSLVSSPRAEKARLYSAIEQRLEQSLVSIGGVISAKIHVSYDLEEKNISSKPMHISVIAIYDSPKESELLVSNIKRFLKNTFSDVKYENISVILTPKEEYVYTNVQPVKEIKSEFLTNEVIYLFLGMAVLVVILLVWAFKTGWFKRNKI.

The first 17 residues, 1–17, serve as a signal peptide directing secretion; that stretch reads MIRYKGFILFLLLMLIG. A lipid anchor (N-palmitoyl cysteine) is attached at Cys18. Cys18 carries the S-diacylglycerol cysteine lipid modification.

Belongs to the YscJ lipoprotein family.

It localises to the cell outer membrane. Functionally, involved in the secretion of the Ipa antigens. This Shigella sonnei protein is Lipoprotein MxiJ (mxiJ).